Reading from the N-terminus, the 253-residue chain is 1-(5-phosphoribosyl)-5-[(5-phosphoribosylamino)methylideneamino] imidazole-4-carboxamide isomerase (253 aa).

The Proton acceptor role is filled by Asp-11. The Proton donor role is filled by Asp-132.

It belongs to the HisA/HisF family.

Its subcellular location is the cytoplasm. It catalyses the reaction 1-(5-phospho-beta-D-ribosyl)-5-[(5-phospho-beta-D-ribosylamino)methylideneamino]imidazole-4-carboxamide = 5-[(5-phospho-1-deoxy-D-ribulos-1-ylimino)methylamino]-1-(5-phospho-beta-D-ribosyl)imidazole-4-carboxamide. Its pathway is amino-acid biosynthesis; L-histidine biosynthesis; L-histidine from 5-phospho-alpha-D-ribose 1-diphosphate: step 4/9. This Methylobacterium nodulans (strain LMG 21967 / CNCM I-2342 / ORS 2060) protein is 1-(5-phosphoribosyl)-5-[(5-phosphoribosylamino)methylideneamino] imidazole-4-carboxamide isomerase.